The primary structure comprises 105 residues: Translation initiation factor 1A 2 (105 aa).

The tract at residues 1–22 (MRKRREGSAAPSTQEVTRVRTP) is disordered. In terms of domain architecture, S1-like spans 17–91 (TRVRTPRKEN…TKADVIWKYT (75 aa)).

Belongs to the eIF-1A family.

In terms of biological role, seems to be required for maximal rate of protein biosynthesis. Enhances ribosome dissociation into subunits and stabilizes the binding of the initiator Met-tRNA(I) to 40 S ribosomal subunits. This chain is Translation initiation factor 1A 2 (eIF1A2), found in Methanosarcina acetivorans (strain ATCC 35395 / DSM 2834 / JCM 12185 / C2A).